A 919-amino-acid polypeptide reads, in one-letter code: Glutamate receptor ionotropic, kainate 3 (919 aa).

The first 31 residues, methionine 1–glycine 31, serve as a signal peptide directing secretion. The Extracellular segment spans residues methionine 32 to proline 563. Asparagine 70, asparagine 76, asparagine 278, asparagine 381, asparagine 415, asparagine 426, and asparagine 433 each carry an N-linked (GlcNAc...) asparagine glycan. An intrachain disulfide couples cysteine 99 to cysteine 350. 3 residues coordinate L-glutamate: proline 518, threonine 520, and arginine 525. N-linked (GlcNAc...) asparagine glycosylation is found at asparagine 548 and asparagine 551. The helical transmembrane segment at aspartate 564–alanine 584 threads the bilayer. The Cytoplasmic segment spans residues arginine 585–arginine 636. A helical transmembrane segment spans residues isoleucine 637–leucine 657. Residues alanine 658–lysine 820 are Extracellular-facing. L-glutamate contacts are provided by alanine 691, threonine 692, and glutamate 739. Asparagine 752 carries an N-linked (GlcNAc...) asparagine glycan. The chain crosses the membrane as a helical span at residues isoleucine 821–glycine 841. At glutamate 842–proline 919 the chain is on the cytoplasmic side. A Phosphoserine modification is found at serine 869. A Glycyl lysine isopeptide (Lys-Gly) (interchain with G-Cter in SUMO1) cross-link involves residue lysine 887.

It belongs to the glutamate-gated ion channel (TC 1.A.10.1) family. GRIK3 subfamily. Homotetramer, and heterotetramer with either GRIK4 or GRIK5. Can form functional heteromeric receptors with GRIK2. Interacts with PRKCABP. Interacts with NETO2.

It localises to the cell membrane. It is found in the postsynaptic cell membrane. The enzyme catalyses Ca(2+)(in) = Ca(2+)(out). Its function is as follows. Ionotropic glutamate receptor that functions as a cation-permeable ligand-gated ion channel, gated by L-glutamate and the glutamatergic agonist kainic acid. Binding of the excitatory neurotransmitter L-glutamate induces a conformation change, leading to the opening of the cation channel, and thereby converts the chemical signal to an electrical impulse. The receptor then desensitizes rapidly and enters a transient inactive state, characterized by the presence of bound agonist. In association with GRIK2, involved in presynaptic facilitation of glutamate release at hippocampal mossy fiber synapses. In Homo sapiens (Human), this protein is Glutamate receptor ionotropic, kainate 3 (GRIK3).